The chain runs to 208 residues: Guanylate kinase (208 aa).

Residues 21 to 201 (GRVVVLSGPS…ACAELVSLLV (181 aa)) form the Guanylate kinase-like domain. 28–35 (GPSAVGKS) provides a ligand contact to ATP.

The protein belongs to the guanylate kinase family.

Its subcellular location is the cytoplasm. The enzyme catalyses GMP + ATP = GDP + ADP. In terms of biological role, essential for recycling GMP and indirectly, cGMP. The polypeptide is Guanylate kinase (gmk) (Mycobacterium bovis (strain ATCC BAA-935 / AF2122/97)).